A 297-amino-acid polypeptide reads, in one-letter code: Aspartate carbamoyltransferase catalytic subunit (297 aa).

Arg49 and Thr50 together coordinate carbamoyl phosphate. Position 77 (Lys77) interacts with L-aspartate. Carbamoyl phosphate is bound by residues Arg99, His129, and Gln132. Positions 162 and 215 each coordinate L-aspartate. Residues Gly256 and Pro257 each contribute to the carbamoyl phosphate site.

The protein belongs to the aspartate/ornithine carbamoyltransferase superfamily. ATCase family. As to quaternary structure, heterododecamer (2C3:3R2) of six catalytic PyrB chains organized as two trimers (C3), and six regulatory PyrI chains organized as three dimers (R2).

The catalysed reaction is carbamoyl phosphate + L-aspartate = N-carbamoyl-L-aspartate + phosphate + H(+). Its pathway is pyrimidine metabolism; UMP biosynthesis via de novo pathway; (S)-dihydroorotate from bicarbonate: step 2/3. Its function is as follows. Catalyzes the condensation of carbamoyl phosphate and aspartate to form carbamoyl aspartate and inorganic phosphate, the committed step in the de novo pyrimidine nucleotide biosynthesis pathway. In Legionella pneumophila (strain Corby), this protein is Aspartate carbamoyltransferase catalytic subunit.